The following is a 596-amino-acid chain: Probable protein S-acyltransferase 22 (596 aa).

2 consecutive transmembrane segments (helical) span residues 15–35 (VVAVAVFLALGFAFYVFFAPF) and 44–64 (IAMGIYTPLITCVVGLYIWCA). The segment at 102-125 (TGGAKSHDGTCVEDTENGSNKKLE) is disordered. The 51-residue stretch at 163–213 (FYCSLCEVEVFKYSKHCRVCDKCVDRFDHHCRWLNNCIGKRNYRKFFSLMV) folds into the DHHC domain. C193 serves as the catalytic S-palmitoyl cysteine intermediate. 2 helical membrane-spanning segments follow: residues 215-235 (AIFLLIMQWSTGIFVLVLCLL) and 254-274 (LIPFVIVVGVCTVLAMLATLP). Disordered stretches follow at residues 433 to 455 (SGRRMFPTKYEGVNNNGKQRRQS), 498 to 523 (QTSRAMSGSGNVMVTSSPESSLDSHD), and 549 to 596 (MGQQ…HKSR). The span at 498–518 (QTSRAMSGSGNVMVTSSPESS) shows a compositional bias: polar residues. The span at 549-571 (MGQQRGQQQQQQLSMMMMPLSRS) shows a compositional bias: low complexity.

Belongs to the DHHC palmitoyltransferase family.

The protein localises to the cell membrane. It is found in the cytoplasmic vesicle membrane. The catalysed reaction is L-cysteinyl-[protein] + hexadecanoyl-CoA = S-hexadecanoyl-L-cysteinyl-[protein] + CoA. Its function is as follows. Palmitoyl acyltransferase. The chain is Probable protein S-acyltransferase 22 (PAT22) from Arabidopsis thaliana (Mouse-ear cress).